Here is a 393-residue protein sequence, read N- to C-terminus: Sialyltransferase-like protein 1 (393 aa).

Over 1–8 (MKRPLRRP) the chain is Cytoplasmic. A helical; Signal-anchor for type II membrane protein membrane pass occupies residues 9–27 (FAVLLFVVLCAAASFPSVL). At 28-393 (RRSVGPAPVL…IAVPPVVFYH (366 aa)) the chain is on the lumenal side. N-linked (GlcNAc...) asparagine glycosylation is found at Asn49, Asn212, and Asn258.

This sequence belongs to the glycosyltransferase 29 family. In terms of tissue distribution, expressed in leaves and stalks. Expressed at low levels in roots.

The protein localises to the golgi apparatus membrane. Its function is as follows. Possesses sialyltransferase-like activity in vitro. Transfers sialic acid to the oligosaccharide Gal-beta-1,3-GalNAc and to glycoproteins such as asialofetuin, alpha-1-acid glycoprotein (NeuAc-alpha-2,3-Gal-beta-1,3-GalNAc-) and andasialo-alpha-1-acid glycoprotein. The transferred sialic acid is linked to galactose of Gal-beta-1,3-GalNAc through alpha-2,6-linkage. In Oryza sativa subsp. japonica (Rice), this protein is Sialyltransferase-like protein 1.